We begin with the raw amino-acid sequence, 300 residues long: UDP-3-O-acyl-N-acetylglucosamine deacetylase (300 aa).

Residues histidine 78, histidine 237, and aspartate 241 each coordinate Zn(2+). Histidine 264 (proton donor) is an active-site residue.

Belongs to the LpxC family. The cofactor is Zn(2+).

The catalysed reaction is a UDP-3-O-[(3R)-3-hydroxyacyl]-N-acetyl-alpha-D-glucosamine + H2O = a UDP-3-O-[(3R)-3-hydroxyacyl]-alpha-D-glucosamine + acetate. It participates in glycolipid biosynthesis; lipid IV(A) biosynthesis; lipid IV(A) from (3R)-3-hydroxytetradecanoyl-[acyl-carrier-protein] and UDP-N-acetyl-alpha-D-glucosamine: step 2/6. Catalyzes the hydrolysis of UDP-3-O-myristoyl-N-acetylglucosamine to form UDP-3-O-myristoylglucosamine and acetate, the committed step in lipid A biosynthesis. The sequence is that of UDP-3-O-acyl-N-acetylglucosamine deacetylase from Acinetobacter baumannii (strain ATCC 17978 / DSM 105126 / CIP 53.77 / LMG 1025 / NCDC KC755 / 5377).